The chain runs to 775 residues: Dipeptidyl peptidase 4 (775 aa).

The first 15 residues, 1–15 (MKFLSLLLLAGIAQA), serve as a signal peptide directing secretion. Residues Asn81, Asn111, Asn170, and Asn219 are each glycosylated (N-linked (GlcNAc...) asparagine). Catalysis depends on charge relay system residues Ser613, Asp690, and His725.

Belongs to the peptidase S9B family.

The protein resides in the secreted. The enzyme catalyses Release of an N-terminal dipeptide, Xaa-Yaa-|-Zaa-, from a polypeptide, preferentially when Yaa is Pro, provided Zaa is neither Pro nor hydroxyproline.. Extracellular dipeptidyl-peptidase which removes N-terminal dipeptides sequentially from polypeptides having unsubstituted N-termini provided that the penultimate residue is proline. Contributes to pathogenicity. The protein is Dipeptidyl peptidase 4 (DPP4) of Trichophyton equinum (Horse ringworm fungus).